The following is a 471-amino-acid chain: ATP synthase subunit beta (471 aa).

Position 156 to 163 (156 to 163 (GGAGVGKT)) interacts with ATP.

This sequence belongs to the ATPase alpha/beta chains family. F-type ATPases have 2 components, CF(1) - the catalytic core - and CF(0) - the membrane proton channel. CF(1) has five subunits: alpha(3), beta(3), gamma(1), delta(1), epsilon(1). CF(0) has three main subunits: a(1), b(2) and c(9-12). The alpha and beta chains form an alternating ring which encloses part of the gamma chain. CF(1) is attached to CF(0) by a central stalk formed by the gamma and epsilon chains, while a peripheral stalk is formed by the delta and b chains.

It localises to the cell membrane. It carries out the reaction ATP + H2O + 4 H(+)(in) = ADP + phosphate + 5 H(+)(out). Functionally, produces ATP from ADP in the presence of a proton gradient across the membrane. The catalytic sites are hosted primarily by the beta subunits. The sequence is that of ATP synthase subunit beta from Lawsonia intracellularis (strain PHE/MN1-00).